A 68-amino-acid polypeptide reads, in one-letter code: Putative transcript Y 10 protein (68 aa).

The protein is Putative transcript Y 10 protein (TTTY10) of Homo sapiens (Human).